Here is a 448-residue protein sequence, read N- to C-terminus: SET domain-containing protein SmydA-8, isoform B (448 aa).

Residues 42–273 enclose the SET domain; the sequence is PSWRVADSPI…AGAEITMSYA (232 aa).

This sequence belongs to the class V-like SAM-binding methyltransferase superfamily.

The polypeptide is SET domain-containing protein SmydA-8, isoform B (Drosophila melanogaster (Fruit fly)).